A 43-amino-acid polypeptide reads, in one-letter code: Methionine aminopeptidase (43 aa).

It belongs to the peptidase M24A family. Methionine aminopeptidase type 1 subfamily. In terms of assembly, monomer. It depends on Co(2+) as a cofactor. Zn(2+) is required as a cofactor. The cofactor is Mn(2+). Fe(2+) serves as cofactor.

The catalysed reaction is Release of N-terminal amino acids, preferentially methionine, from peptides and arylamides.. In terms of biological role, removes the N-terminal methionine from nascent proteins. The N-terminal methionine is often cleaved when the second residue in the primary sequence is small and uncharged (Met-Ala-, Cys, Gly, Pro, Ser, Thr, or Val). Requires deformylation of the N(alpha)-formylated initiator methionine before it can be hydrolyzed. The polypeptide is Methionine aminopeptidase (map) (Klebsiella oxytoca).